A 105-amino-acid polypeptide reads, in one-letter code: Ketoisovalerate oxidoreductase subunit VorD (105 aa).

4Fe-4S ferredoxin-type domains follow at residues 44–73 (FMPVIDESKCVKCYICWKFCPEPAIYIKED) and 74–103 (GFVAIDYDYCKGCGICANECPTKAITMVRE). Positions 53, 56, 59, 63, 83, 86, 89, and 93 each coordinate [4Fe-4S] cluster.

In terms of assembly, heterotetramer of one alpha, one beta, one delta and one gamma chain. [4Fe-4S] cluster serves as cofactor.

It carries out the reaction 3-methyl-2-oxobutanoate + 2 oxidized [2Fe-2S]-[ferredoxin] + CoA = 2-methylpropanoyl-CoA + 2 reduced [2Fe-2S]-[ferredoxin] + CO2 + H(+). This chain is Ketoisovalerate oxidoreductase subunit VorD (vorD), found in Pyrococcus abyssi (strain GE5 / Orsay).